A 213-amino-acid chain; its full sequence is FMN-dependent NADH:quinone oxidoreductase 3 (213 aa).

FMN-binding positions include serine 10, 16 to 18 (SVS), and 96 to 99 (MYNF).

The protein belongs to the azoreductase type 1 family. As to quaternary structure, homodimer. Requires FMN as cofactor.

The enzyme catalyses 2 a quinone + NADH + H(+) = 2 a 1,4-benzosemiquinone + NAD(+). It catalyses the reaction N,N-dimethyl-1,4-phenylenediamine + anthranilate + 2 NAD(+) = 2-(4-dimethylaminophenyl)diazenylbenzoate + 2 NADH + 2 H(+). In terms of biological role, quinone reductase that provides resistance to thiol-specific stress caused by electrophilic quinones. Shows a preference for naphthoquinones such as plumbagin. Its function is as follows. Also exhibits azoreductase activity. Catalyzes the reductive cleavage of the azo bond in aromatic azo compounds to the corresponding amines. Preferred substrates are methyl red, amaranth and p-aminoazobenzene sulfonamide (PAABSA). This Pseudomonas aeruginosa (strain ATCC 15692 / DSM 22644 / CIP 104116 / JCM 14847 / LMG 12228 / 1C / PRS 101 / PAO1) protein is FMN-dependent NADH:quinone oxidoreductase 3.